Consider the following 380-residue polypeptide: Cell division protein FtsZ (380 aa).

Residues 27–31 (GAGNN), 119–121 (GTG), Glu-150, and Asn-189 each bind GTP.

This sequence belongs to the FtsZ family. As to quaternary structure, homodimer. Polymerizes to form a dynamic ring structure in a strictly GTP-dependent manner. Interacts directly with several other division proteins.

The protein resides in the cytoplasm. Essential cell division protein that forms a contractile ring structure (Z ring) at the future cell division site. The regulation of the ring assembly controls the timing and the location of cell division. One of the functions of the FtsZ ring is to recruit other cell division proteins to the septum to produce a new cell wall between the dividing cells. Binds GTP and shows GTPase activity. This is Cell division protein FtsZ from Mycoplasma pneumoniae (strain ATCC 29342 / M129 / Subtype 1) (Mycoplasmoides pneumoniae).